A 468-amino-acid polypeptide reads, in one-letter code: 6-phospho-beta-galactosidase (468 aa).

The D-galactose 6-phosphate site is built by Q19, H116, N159, E160, and N297. Catalysis depends on E160, which acts as the Proton donor. Catalysis depends on E375, which acts as the Nucleophile. D-galactose 6-phosphate contacts are provided by S428, W429, K435, and Y437.

Belongs to the glycosyl hydrolase 1 family.

The catalysed reaction is a 6-phospho-beta-D-galactoside + H2O = D-galactose 6-phosphate + an alcohol. It functions in the pathway carbohydrate metabolism; lactose degradation; D-galactose 6-phosphate and beta-D-glucose from lactose 6-phosphate: step 1/1. This chain is 6-phospho-beta-galactosidase, found in Streptococcus gordonii (strain Challis / ATCC 35105 / BCRC 15272 / CH1 / DL1 / V288).